The chain runs to 192 residues: Imidazoleglycerol-phosphate dehydratase (192 aa).

Belongs to the imidazoleglycerol-phosphate dehydratase family.

Its subcellular location is the cytoplasm. The enzyme catalyses D-erythro-1-(imidazol-4-yl)glycerol 3-phosphate = 3-(imidazol-4-yl)-2-oxopropyl phosphate + H2O. The protein operates within amino-acid biosynthesis; L-histidine biosynthesis; L-histidine from 5-phospho-alpha-D-ribose 1-diphosphate: step 6/9. The chain is Imidazoleglycerol-phosphate dehydratase from Clostridioides difficile (strain 630) (Peptoclostridium difficile).